The chain runs to 158 residues: 6,7-dimethyl-8-ribityllumazine synthase (158 aa).

Residues phenylalanine 24, 58-60 (AFE), and 82-84 (AVI) each bind 5-amino-6-(D-ribitylamino)uracil. A (2S)-2-hydroxy-3-oxobutyl phosphate-binding site is contributed by 87 to 88 (GT). Residue histidine 90 is the Proton donor of the active site. Residue phenylalanine 115 participates in 5-amino-6-(D-ribitylamino)uracil binding. (2S)-2-hydroxy-3-oxobutyl phosphate is bound at residue arginine 129.

The protein belongs to the DMRL synthase family. In terms of assembly, forms an icosahedral capsid composed of 60 subunits, arranged as a dodecamer of pentamers.

The catalysed reaction is (2S)-2-hydroxy-3-oxobutyl phosphate + 5-amino-6-(D-ribitylamino)uracil = 6,7-dimethyl-8-(1-D-ribityl)lumazine + phosphate + 2 H2O + H(+). Its pathway is cofactor biosynthesis; riboflavin biosynthesis; riboflavin from 2-hydroxy-3-oxobutyl phosphate and 5-amino-6-(D-ribitylamino)uracil: step 1/2. In terms of biological role, catalyzes the formation of 6,7-dimethyl-8-ribityllumazine by condensation of 5-amino-6-(D-ribitylamino)uracil with 3,4-dihydroxy-2-butanone 4-phosphate. This is the penultimate step in the biosynthesis of riboflavin. This is 6,7-dimethyl-8-ribityllumazine synthase from Stutzerimonas stutzeri (strain A1501) (Pseudomonas stutzeri).